Reading from the N-terminus, the 425-residue chain is Adenylosuccinate synthetase (425 aa).

Residues glycine 12–lysine 18 and glycine 40–threonine 42 contribute to the GTP site. The Proton acceptor role is filled by aspartate 13. Mg(2+) is bound by residues aspartate 13 and glycine 40. IMP is bound by residues aspartate 13 to lysine 16, asparagine 38 to histidine 41, threonine 127, arginine 141, glutamine 222, threonine 237, and arginine 301. Histidine 41 acts as the Proton donor in catalysis. Residue alanine 297–arginine 303 coordinates substrate. GTP is bound by residues arginine 303, lysine 329 to aspartate 331, and serine 411 to glycine 413.

It belongs to the adenylosuccinate synthetase family. In terms of assembly, homodimer. It depends on Mg(2+) as a cofactor.

It is found in the cytoplasm. It catalyses the reaction IMP + L-aspartate + GTP = N(6)-(1,2-dicarboxyethyl)-AMP + GDP + phosphate + 2 H(+). It participates in purine metabolism; AMP biosynthesis via de novo pathway; AMP from IMP: step 1/2. Plays an important role in the de novo pathway of purine nucleotide biosynthesis. Catalyzes the first committed step in the biosynthesis of AMP from IMP. This Fusobacterium nucleatum protein is Adenylosuccinate synthetase.